Consider the following 49-residue polypeptide: Sperm protamine P1 (49 aa).

The interval 1 to 49 is disordered; it reads MARYRCCRSHSRSRCRRRRRRSRRRRRRSCGRRRRAGYRRYTVRYRRRR.

This sequence belongs to the protamine P1 family. In terms of tissue distribution, testis.

The protein localises to the nucleus. Its subcellular location is the chromosome. Functionally, protamines substitute for histones in the chromatin of sperm during the haploid phase of spermatogenesis. They compact sperm DNA into a highly condensed, stable and inactive complex. The chain is Sperm protamine P1 (PRM1) from Macronycteris commersonii (Commerson's roundleaf bat).